The sequence spans 87 residues: MWLKTQLFVLAIAVIALLEVHAEPESNDNNELVVEEARGCADAYKSCNHPRTCCDGYNGYKRACICSGSNCKCKKSLREMAAAAFGR.

A signal peptide spans 1 to 22 (MWLKTQLFVLAIAVIALLEVHA). A propeptide spanning residues 23 to 37 (EPESNDNNELVVEEA) is cleaved from the precursor. Cystine bridges form between cysteine 40–cysteine 54, cysteine 47–cysteine 64, cysteine 53–cysteine 73, and cysteine 66–cysteine 71. The propeptide occupies 75 to 87 (KSLREMAAAAFGR).

This sequence belongs to the neurotoxin 02 (plectoxin) family. 01 (Tx3) subfamily. As to expression, expressed by the venom gland.

The protein localises to the secreted. Antagonist of L-type calcium channels (Cav1/CACNA1). This is U9-ctenitoxin-Pn1a from Phoneutria nigriventer (Brazilian armed spider).